Reading from the N-terminus, the 434-residue chain is Enolase (434 aa).

Q167 provides a ligand contact to (2R)-2-phosphoglycerate. E209 functions as the Proton donor in the catalytic mechanism. Mg(2+) contacts are provided by D246, E291, and D318. (2R)-2-phosphoglycerate is bound by residues K343, R372, S373, and K394. The Proton acceptor role is filled by K343.

This sequence belongs to the enolase family. In terms of assembly, component of the RNA degradosome, a multiprotein complex involved in RNA processing and mRNA degradation. Mg(2+) is required as a cofactor.

Its subcellular location is the cytoplasm. It localises to the secreted. The protein localises to the cell surface. The enzyme catalyses (2R)-2-phosphoglycerate = phosphoenolpyruvate + H2O. The protein operates within carbohydrate degradation; glycolysis; pyruvate from D-glyceraldehyde 3-phosphate: step 4/5. Functionally, catalyzes the reversible conversion of 2-phosphoglycerate (2-PG) into phosphoenolpyruvate (PEP). It is essential for the degradation of carbohydrates via glycolysis. This Buchnera aphidicola subsp. Acyrthosiphon pisum (strain 5A) protein is Enolase.